The primary structure comprises 115 residues: Phosphoribosyl-AMP cyclohydrolase (115 aa).

Asp-80 is a binding site for Mg(2+). Cys-81 is a binding site for Zn(2+). 2 residues coordinate Mg(2+): Asp-82 and Asp-84. Residues Cys-97 and Cys-104 each contribute to the Zn(2+) site.

The protein belongs to the PRA-CH family. Homodimer. Mg(2+) is required as a cofactor. The cofactor is Zn(2+).

It localises to the cytoplasm. It carries out the reaction 1-(5-phospho-beta-D-ribosyl)-5'-AMP + H2O = 1-(5-phospho-beta-D-ribosyl)-5-[(5-phospho-beta-D-ribosylamino)methylideneamino]imidazole-4-carboxamide. The protein operates within amino-acid biosynthesis; L-histidine biosynthesis; L-histidine from 5-phospho-alpha-D-ribose 1-diphosphate: step 3/9. Catalyzes the hydrolysis of the adenine ring of phosphoribosyl-AMP. The chain is Phosphoribosyl-AMP cyclohydrolase from Nocardia farcinica (strain IFM 10152).